The following is a 1501-amino-acid chain: Inactive protein tyrosine kinase pTKL (1501 aa).

Residues N64, N128, and N133 are each glycosylated (N-linked (GlcNAc...) asparagine). Basic residues predominate over residues 204–221; sequence KKNKKNKKNKKKKNKKTK. Residues 204 to 223 form a disordered region; the sequence is KKNKKNKKNKKKKNKKTKNT. N-linked (GlcNAc...) asparagine glycans are attached at residues N239, N242, N258, and N327. A compositionally biased stretch (basic and acidic residues) spans 257–273; that stretch reads MNISLHEKNDKKNEKKN. The interval 257–276 is disordered; it reads MNISLHEKNDKKNEKKNEKK. Positions 301–366 constitute an SAM domain; that stretch reads WSLREVIQWL…LQLIKNLQVM (66 aa). The interval 392 to 425 is disordered; sequence NKNIKKGKNIKKEKKKKKEKNIKKEKKKKKKETK. Residues 394–424 show a composition bias toward basic residues; it reads NIKKGKNIKKEKKKKKEKNIKKEKKKKKKET. Residues 399 to 433 are a coiled coil; it reads KNIKKEKKKKKEKNIKKEKKKKKKETKKFNNMDKK. N-linked (GlcNAc...) asparagine glycans are attached at residues N448, N463, and N471. Residues 483–486 carry the RVxF motif 1 motif; the sequence is KVSF. N-linked (GlcNAc...) asparagine glycosylation is present at N506. Over residues 543 to 597 the composition is skewed to low complexity; sequence QLSSPLSSPLSSPSPSSSPSSSPSSSPSSSPSSSPSPSSSPSPSSSPSSSPSSSP. The disordered stretch occupies residues 543 to 607; the sequence is QLSSPLSSPL…SSPPSPLSYK (65 aa). N-linked (GlcNAc...) asparagine glycosylation occurs at N652. The disordered stretch occupies residues 659–678; it reads IKKSKSKYNNDKKEQKKLPL. Positions 666 to 675 are enriched in basic and acidic residues; it reads YNNDKKEQKK. N-linked (GlcNAc...) asparagine glycans are attached at residues N681, N712, N737, N811, and N819. ATP is bound by residues 836–844 and K864; that span reads QNINNFGKY. Residues N1024, N1031, N1074, and N1157 are each glycosylated (N-linked (GlcNAc...) asparagine). The 396-residue stretch at 1088–1483 folds into the Protein kinase domain; it reads FHYQHNVLCG…HILKTISTLY (396 aa). Positions 1238–1241 match the RVxF motif 2 motif; that stretch reads KVLF. N1382 carries N-linked (GlcNAc...) asparagine glycosylation.

This sequence belongs to the protein kinase superfamily. TKL Ser/Thr protein kinase family. As to quaternary structure, interacts (via RVxF motif 1 and/or 2) with phosphatase PP1C. May interact (via SAM domain) with SERA5 (via C-terminus).

The protein localises to the parasitophorous vacuole. It localises to the host cell membrane. It is found in the host cytoplasm. The protein resides in the host cytoskeleton. This is Inactive protein tyrosine kinase pTKL from Plasmodium falciparum (isolate 3D7).